The chain runs to 296 residues: tRNA dimethylallyltransferase (296 aa).

9–16 (GPTAVGKT) provides a ligand contact to ATP. A substrate-binding site is contributed by 11–16 (TAVGKT). Residues 34–37 (DSRQ) form an interaction with substrate tRNA region.

This sequence belongs to the IPP transferase family. As to quaternary structure, monomer. Mg(2+) serves as cofactor.

It catalyses the reaction adenosine(37) in tRNA + dimethylallyl diphosphate = N(6)-dimethylallyladenosine(37) in tRNA + diphosphate. Catalyzes the transfer of a dimethylallyl group onto the adenine at position 37 in tRNAs that read codons beginning with uridine, leading to the formation of N6-(dimethylallyl)adenosine (i(6)A). In Chloroflexus aggregans (strain MD-66 / DSM 9485), this protein is tRNA dimethylallyltransferase.